The primary structure comprises 502 residues: Sodium/proline symporter (502 aa).

Residues 1 to 5 (MAIST) lie on the Periplasmic side of the membrane. Residues 6–26 (PMLVTFCVYIFGMILIGFIAW) form a helical membrane-spanning segment. Residues 27–41 (RSTKNFDDYILGGRS) lie on the Cytoplasmic side of the membrane. 2 hydrophilic regions span residues 27-66 (RSTKNFDDYILGGRSLGPFVTALSAGASDMSGWLLMGLPG) and 88-124 (INWKLVAGRLRVHTEYNNNALTLPDYFTGRFEDKSRI). Residues 42 to 62 (LGPFVTALSAGASDMSGWLLM) form a helical membrane-spanning segment. Topologically, residues 63–67 (GLPGA) are periplasmic. The helical transmembrane segment at 68–88 (VFLSGISESWIAIGLTLGAWI) threads the bilayer. Residues 89-126 (NWKLVAGRLRVHTEYNNNALTLPDYFTGRFEDKSRILR) lie on the Cytoplasmic side of the membrane. Residues 127–147 (IISALVILLFFTIYCASGIVA) form a helical membrane-spanning segment. At 148-162 (GARLFESTFGMSYET) the chain is on the periplasmic side. Residues 151-162 (LFESTFGMSYET) form a hydrophilic region. Residues 163 to 183 (ALWAGAAATILYTFIGGFLAV) traverse the membrane as a helical segment. Residues 184-192 (SWTDTVQAS) are Cytoplasmic-facing. Positions 185–189 (WTDTV) are hydrophilic. Residues 193-213 (LMIFALILTPVIVIISVGGFG) traverse the membrane as a helical segment. Hydrophilic stretches follow at residues 214–231 (DSLEVIKQKSIENVDMLK), 249–274 (FGQPHILARFMAADSHHSIVHARRIS), and 296–319 (FNDHPALAGAVNQNAERVFIELAQ). The Periplasmic segment spans residues 214-234 (DSLEVIKQKSIENVDMLKGLN). Residues 235–255 (FVAIISLMGWGLGYFGQPHIL) traverse the membrane as a helical segment. Over 256–275 (ARFMAADSHHSIVHARRISM) the chain is Cytoplasmic. A helical transmembrane segment spans residues 276–296 (TWMILCLAGAVAVGFFGIAYF). The Periplasmic segment spans residues 297-319 (NDHPALAGAVNQNAERVFIELAQ). Residues 320–340 (ILFNPWIAGILLSAILAAVMS) traverse the membrane as a helical segment. The Cytoplasmic segment spans residues 341–370 (TLSCQLLVCSSAITEDLYKAFLRKHASQKE). Residues 341-370 (TLSCQLLVCSSAITEDLYKAFLRKHASQKE) form a hydrophilic region. Residues 371 to 391 (LVWVGRVMVLVVALVAIALAA) form a helical membrane-spanning segment. Over 392 to 397 (NPENRV) the chain is Periplasmic. The segment at 392–397 (NPENRV) is hydrophilic. A helical transmembrane segment spans residues 398–418 (LGLVSYAWAGFGAAFGPVVLF). The Cytoplasmic portion of the chain corresponds to 419–427 (SVMWSRMTR). 2 hydrophilic regions span residues 424 to 430 (RMTRNGA) and 446 to 448 (QFG). A run of 2 helical transmembrane segments spans residues 428–448 (NGALAGMIIGALTVIVWKQFG) and 449–469 (WLGLYEIIPGFIFGSIGIVVF). At 470–502 (SLLGKAPSAAMQKRFAEADAHYHSAPPSRLQES) the chain is on the cytoplasmic side. Positions 476-502 (PSAAMQKRFAEADAHYHSAPPSRLQES) are hydrophilic.

This sequence belongs to the sodium:solute symporter (SSF) (TC 2.A.21) family. In terms of assembly, has been isolated from inner membrane preparations as a homodimer.

Its subcellular location is the cell inner membrane. It catalyses the reaction L-proline(in) + Na(+)(in) = L-proline(out) + Na(+)(out). With respect to regulation, activity is stimulated by phosphatidylethanolamine and phosphatidylglycerol, but not by phosphatidylcholine and cardiolipin. Proline uptake is inhibited by the sulfhydryl reagent N-ethylmaleimide (NEM). Proline, in the presence of Na(+) or Li(+), protects the carrier functions from NEM-inactivation. Its function is as follows. Catalyzes the sodium-dependent uptake of extracellular L-proline. This protein is also capable of using lithium as the transport cation. Also catalyzes the uptake of propionate. The chain is Sodium/proline symporter (putP) from Escherichia coli (strain K12).